The following is a 506-amino-acid chain: UDP-N-acetylglucosamine--peptide N-acetylglucosaminyltransferase GtfA subunit (506 aa).

G16 to Y19 lines the UDP pocket. N-acetyl-D-glucosamine is bound at residue H241. H384–K385 provides a ligand contact to UDP. E404 to G407 serves as a coordination point for N-acetyl-D-glucosamine.

It belongs to the glycosyltransferase group 1 family. Glycosyltransferase 4 subfamily. Interacts with stabilizing protein GtfB (Gtf2), probably as a heterotetramer with 2 subunits each of GtfA and GtfB, part of the accessory SecA2/SecY2 protein translocation apparatus.

It is found in the cytoplasm. It localises to the cell membrane. The enzyme catalyses L-seryl-[protein] + UDP-N-acetyl-alpha-D-glucosamine = 3-O-[N-acetyl-alpha-D-glucosaminyl]-L-seryl-[protein] + UDP + H(+). The protein operates within protein modification; protein glycosylation. Functionally, required for polymorphic O-glycosylation of the serine-rich repeat protein Srr2. Catalyzes the first step in glycosylation by transferring N-acetylglucosamine from UDP-GlcNAc to serine residues of Srr2. Part of the accessory SecA2/SecY2 system specifically required to export serine-rich repeat proteins, probably Srr2 in this organism. The GtfA-GtfB (Gtf1-Gtf2 in this bacteria) complex adds GlcNAc from UDP-GlcNAc to Srr2 substrate. This subunit has low glycosyltransferase activity; GtfB enhances glycosyltransferase activity in vitro. Upon expression in S.parasanguis GtfA/GtfB restores expression of serine-rich repeat protein Fap1 and complements a biofilm formation defect. The protein is UDP-N-acetylglucosamine--peptide N-acetylglucosaminyltransferase GtfA subunit of Streptococcus agalactiae.